The following is a 476-amino-acid chain: MNSLIEQQVAEIGIEAYLDQHHHKSLLRFLTCGSVDDGKSTLIGRLLHDSHQIYEDQLAAIYTDSQKVGTTGDKPDLALLVDGLQAEREQGITIDVAYRYFSTKKRKFIIADTPGHEQYTRNMATGASTCDVAVILIDARKGVLDQTRRHSYIASLLGIRHFIVAINKMDLVGFDEERFTSIRDEYLEFAEKLNKNIEIKLVPLSALDGDNVVSLSEQTPWYKGDSLLTLLEDVDFVQEQESSDFRFPVQYVNRPNLDFRGFAGTIASGLVKVGDKVKALPSGKMSTIDRIVTFDGDLPEAYSGQAITLTLKDEIDISRGDTIVAADDDVPLSHNLLADIVWMAEAPLEVGRQYDIKVAGKKTVGSVQGIRHQVDINNLETFTTETLPLNGIGLCEVVLNEAIAVDAYQNSIDTGGFIIIDRLTNVTVGAGMVREALIDKTVVSTGDFSAFEIEFNALVRKHFPHWNADDISKLLG.

Residues 24-241 (KSLLRFLTCG…EDVDFVQEQE (218 aa)) form the tr-type G domain. Residues 33-40 (GSVDDGKS) are G1. 33 to 40 (GSVDDGKS) lines the GTP pocket. The segment at 91–95 (GITID) is G2. Residues 112–115 (DTPG) form a G3 region. GTP contacts are provided by residues 112-116 (DTPGH) and 167-170 (NKMD). The interval 167–170 (NKMD) is G4. The segment at 205 to 207 (SAL) is G5.

Belongs to the TRAFAC class translation factor GTPase superfamily. Classic translation factor GTPase family. CysN/NodQ subfamily. In terms of assembly, heterodimer composed of CysD, the smaller subunit, and CysN.

The catalysed reaction is sulfate + ATP + H(+) = adenosine 5'-phosphosulfate + diphosphate. The protein operates within sulfur metabolism; hydrogen sulfide biosynthesis; sulfite from sulfate: step 1/3. Its function is as follows. With CysD forms the ATP sulfurylase (ATPS) that catalyzes the adenylation of sulfate producing adenosine 5'-phosphosulfate (APS) and diphosphate, the first enzymatic step in sulfur assimilation pathway. APS synthesis involves the formation of a high-energy phosphoric-sulfuric acid anhydride bond driven by GTP hydrolysis by CysN coupled to ATP hydrolysis by CysD. The sequence is that of Sulfate adenylyltransferase subunit 1 from Photobacterium profundum (strain SS9).